Here is a 512-residue protein sequence, read N- to C-terminus: Maturase K (512 aa).

Belongs to the intron maturase 2 family. MatK subfamily.

The protein resides in the plastid. It is found in the chloroplast. Its function is as follows. Usually encoded in the trnK tRNA gene intron. Probably assists in splicing its own and other chloroplast group II introns. The chain is Maturase K from Acer campestre (Field maple).